Here is a 195-residue protein sequence, read N- to C-terminus: FK506-binding protein 2 (195 aa).

The signal sequence occupies residues 1-19 (MKAALFLSALASTAVGVVA). Residues 39–127 (GDGVHMHYRG…VFETELVGID (89 aa)) enclose the PPIase FKBP-type domain. A Prevents secretion from ER motif is present at residues 192–195 (HEEL).

Belongs to the FKBP-type PPIase family. FKBP2 subfamily.

It is found in the endoplasmic reticulum. The catalysed reaction is [protein]-peptidylproline (omega=180) = [protein]-peptidylproline (omega=0). With respect to regulation, inhibited by both FK506 and rapamycin. Its function is as follows. PPIases accelerate the folding of proteins. It catalyzes the cis-trans isomerization of proline imidic peptide bonds in oligopeptides. The protein is FK506-binding protein 2 (FPR2) of Gibberella zeae (strain ATCC MYA-4620 / CBS 123657 / FGSC 9075 / NRRL 31084 / PH-1) (Wheat head blight fungus).